Consider the following 260-residue polypeptide: Acetylglutamate kinase (260 aa).

Substrate contacts are provided by residues 41–42 (GG), Arg63, and Asn157.

This sequence belongs to the acetylglutamate kinase family. ArgB subfamily.

It is found in the cytoplasm. It catalyses the reaction N-acetyl-L-glutamate + ATP = N-acetyl-L-glutamyl 5-phosphate + ADP. Its pathway is amino-acid biosynthesis; L-arginine biosynthesis; N(2)-acetyl-L-ornithine from L-glutamate: step 2/4. Its function is as follows. Catalyzes the ATP-dependent phosphorylation of N-acetyl-L-glutamate. The protein is Acetylglutamate kinase of Acidobacterium capsulatum (strain ATCC 51196 / DSM 11244 / BCRC 80197 / JCM 7670 / NBRC 15755 / NCIMB 13165 / 161).